The sequence spans 317 residues: Protein phosphatase PTC7 homolog fig (317 aa).

The PPM-type phosphatase domain maps to 46–312 (PYLVTVVQGR…DDITLILASV (267 aa)). 3 residues coordinate Mn(2+): Asp-90, Gly-91, and Asp-235.

Belongs to the PP2C family. The cofactor is Mg(2+). Requires Mn(2+) as cofactor.

It catalyses the reaction O-phospho-L-seryl-[protein] + H2O = L-seryl-[protein] + phosphate. The catalysed reaction is O-phospho-L-threonyl-[protein] + H2O = L-threonyl-[protein] + phosphate. In Drosophila erecta (Fruit fly), this protein is Protein phosphatase PTC7 homolog fig.